We begin with the raw amino-acid sequence, 102 residues long: Small ribosomal subunit protein uS10 (102 aa).

Belongs to the universal ribosomal protein uS10 family. Part of the 30S ribosomal subunit.

Functionally, involved in the binding of tRNA to the ribosomes. The protein is Small ribosomal subunit protein uS10 of Nocardioides sp. (strain ATCC BAA-499 / JS614).